Here is an 83-residue protein sequence, read N- to C-terminus: MSSGGLLLLLGLLTLWEVLTPVSSKDRPDFCELPADTGPCRVGFPSFYYNPDEKKCLEFIYGGCEGSANNFITKEECESTCAA.

An N-terminal signal peptide occupies residues 1–24; the sequence is MSSGGLLLLLGLLTLWEVLTPVSS. Residues 31 to 81 enclose the BPTI/Kunitz inhibitor domain; sequence CELPADTGPCRVGFPSFYYNPDEKKCLEFIYGGCEGSANNFITKEECESTC. 3 cysteine pairs are disulfide-bonded: Cys-31–Cys-81, Cys-40–Cys-64, and Cys-56–Cys-77.

Belongs to the venom Kunitz-type family. As to expression, expressed by the venom gland.

The protein localises to the secreted. Serine protease inhibitor. In Oxyuranus scutellatus scutellatus (Australian taipan), this protein is Kunitz-type serine protease inhibitor scutellin-1.